We begin with the raw amino-acid sequence, 89 residues long: Small ribosomal subunit protein uS15 (89 aa).

It belongs to the universal ribosomal protein uS15 family. In terms of assembly, part of the 30S ribosomal subunit. Forms a bridge to the 50S subunit in the 70S ribosome, contacting the 23S rRNA.

Functionally, one of the primary rRNA binding proteins, it binds directly to 16S rRNA where it helps nucleate assembly of the platform of the 30S subunit by binding and bridging several RNA helices of the 16S rRNA. Forms an intersubunit bridge (bridge B4) with the 23S rRNA of the 50S subunit in the ribosome. This Renibacterium salmoninarum (strain ATCC 33209 / DSM 20767 / JCM 11484 / NBRC 15589 / NCIMB 2235) protein is Small ribosomal subunit protein uS15.